A 428-amino-acid polypeptide reads, in one-letter code: Chaperone SurA (428 aa).

The N-terminal stretch at Met1–Ala13 is a signal peptide. 2 PpiC domains span residues Ser164–Glu265 and Arg276–Gly375.

The protein resides in the periplasm. It catalyses the reaction [protein]-peptidylproline (omega=180) = [protein]-peptidylproline (omega=0). In terms of biological role, chaperone involved in the correct folding and assembly of outer membrane proteins. Recognizes specific patterns of aromatic residues and the orientation of their side chains, which are found more frequently in integral outer membrane proteins. May act in both early periplasmic and late outer membrane-associated steps of protein maturation. The protein is Chaperone SurA of Pseudomonas savastanoi pv. phaseolicola (strain 1448A / Race 6) (Pseudomonas syringae pv. phaseolicola (strain 1448A / Race 6)).